The following is a 759-amino-acid chain: Nucleolar RNA helicase 2-A (759 aa).

The tract at residues M1 to I154 is disordered. A compositionally biased stretch (acidic residues) spans E77–Q86. Residues G179–S207 carry the Q motif motif. Positions F210–K389 constitute a Helicase ATP-binding domain. A223–T230 contributes to the ATP binding site. The DEAD box signature appears at D332 to D335. The region spanning D422–A566 is the Helicase C-terminal domain. Positions Q709 to R759 are disordered. Residues E710–R719 show a composition bias toward basic and acidic residues. Basic residues predominate over residues G748–R759.

It belongs to the DEAD box helicase family. DDX21/DDX50 subfamily. Widely expressed. Expressed at higher level in stomach. Expressed at higher level compared to ddx21-b.

The protein resides in the nucleus. Its subcellular location is the nucleolus. It is found in the nucleoplasm. The protein localises to the cytoplasm. It localises to the cytosol. The protein resides in the mitochondrion. The catalysed reaction is ATP + H2O = ADP + phosphate + H(+). Its function is as follows. RNA helicase that acts as a sensor of the transcriptional status of both RNA polymerase (Pol) I and II: promotes ribosomal RNA (rRNA) processing and transcription from polymerase II (Pol II). Binds various RNAs, such as rRNAs, snoRNAs, 7SK and, at lower extent, mRNAs. In the nucleolus, localizes to rDNA locus, where it directly binds rRNAs and snoRNAs, and promotes rRNA transcription, processing and modification. Required for rRNA 2'-O-methylation, possibly by promoting the recruitment of late-acting snoRNAs SNORD56 and SNORD58 with pre-ribosomal complexes. In the nucleoplasm, binds 7SK RNA and is recruited to the promoters of Pol II-transcribed genes: acts by facilitating the release of P-TEFb from inhibitory 7SK snRNP in a manner that is dependent on its helicase activity, thereby promoting transcription of its target genes. Required to prevent R-loop-associated DNA damage and transcription-associated genomic instability. In Xenopus laevis (African clawed frog), this protein is Nucleolar RNA helicase 2-A (ddx21-a).